A 532-amino-acid chain; its full sequence is CTP synthase (532 aa).

An amidoligase domain region spans residues 1-269 (MNQASTRFIF…DTQILNHFNI (269 aa)). Position 17 (S17) interacts with CTP. S17 is a UTP binding site. Residues 18-23 (SLGKGL) and D75 each bind ATP. Mg(2+) contacts are provided by D75 and E143. CTP is bound by residues 150–152 (DIE), 190–195 (KTKPTQ), and K226. UTP is bound by residues 190–195 (KTKPTQ) and K226. One can recognise a Glutamine amidotransferase type-1 domain in the interval 294-532 (NVAIIGKYIK…FISFIKASLD (239 aa)). G355 is a binding site for L-glutamine. Residue C382 is the Nucleophile; for glutamine hydrolysis of the active site. Residues 383-386 (MGMQ), E406, and R462 contribute to the L-glutamine site. Residues H509 and E511 contribute to the active site.

It belongs to the CTP synthase family. In terms of assembly, homotetramer.

The catalysed reaction is UTP + L-glutamine + ATP + H2O = CTP + L-glutamate + ADP + phosphate + 2 H(+). It carries out the reaction L-glutamine + H2O = L-glutamate + NH4(+). The enzyme catalyses UTP + NH4(+) + ATP = CTP + ADP + phosphate + 2 H(+). The protein operates within pyrimidine metabolism; CTP biosynthesis via de novo pathway; CTP from UDP: step 2/2. Allosterically activated by GTP, when glutamine is the substrate; GTP has no effect on the reaction when ammonia is the substrate. The allosteric effector GTP functions by stabilizing the protein conformation that binds the tetrahedral intermediate(s) formed during glutamine hydrolysis. Inhibited by the product CTP, via allosteric rather than competitive inhibition. Its function is as follows. Catalyzes the ATP-dependent amination of UTP to CTP with either L-glutamine or ammonia as the source of nitrogen. Regulates intracellular CTP levels through interactions with the four ribonucleotide triphosphates. This Ehrlichia chaffeensis (strain ATCC CRL-10679 / Arkansas) protein is CTP synthase.